The primary structure comprises 354 residues: MEPVISPTLDSKQSWSIFILDHEESLASPRKLNIPNPENVYSENRRYFADQDFRRPRHKPDQNMVEYWVPPEKTSVAKNNTTGQAVTPGQAKKLNQVCPASAPNGKRAMKIPKVKEPRGENSSKKSSADQAPGPFRVMYWKVGQYFEKASGTVNHHYQKVVLFRNRMKANKVAPIHTKVQSRHLELEPLCCLSSCLVRGGCTTVVVFELCYVVATALCIFEAMFRKKFALWEPFPKSFNGWFAHPLFYYTIAVYDVALFVIAIATARALVNFDKAVLHIHYIFCIFSFFINFFFLIFSIWSLVSPGSLTFTPINCLLIFCFLYQLPLNIWGFFVVKSCRDFFALIHVFVSLAEA.

The segment at 96-130 (QVCPASAPNGKRAMKIPKVKEPRGENSSKKSSADQ) is disordered. Positions 113–127 (KVKEPRGENSSKKSS) are enriched in basic and acidic residues.

This is an uncharacterized protein from Caenorhabditis elegans.